Here is a 253-residue protein sequence, read N- to C-terminus: Phosphoadenosine 5'-phosphosulfate reductase (253 aa).

Residue cysteine 239 is the Nucleophile; cysteine thiosulfonate intermediate of the active site.

This sequence belongs to the PAPS reductase family. CysH subfamily.

The protein localises to the cytoplasm. The catalysed reaction is [thioredoxin]-disulfide + sulfite + adenosine 3',5'-bisphosphate + 2 H(+) = [thioredoxin]-dithiol + 3'-phosphoadenylyl sulfate. The protein operates within sulfur metabolism; hydrogen sulfide biosynthesis; sulfite from sulfate: step 3/3. In terms of biological role, catalyzes the formation of sulfite from phosphoadenosine 5'-phosphosulfate (PAPS) using thioredoxin as an electron donor. The protein is Phosphoadenosine 5'-phosphosulfate reductase of Aliivibrio fischeri (strain MJ11) (Vibrio fischeri).